The following is an 862-amino-acid chain: Protein SEY1 (862 aa).

Residues 1–743 (MASNGHFSSV…KRSAIGGITQ (743 aa)) are Cytoplasmic-facing. Positions 48–301 (GFNYHLISVF…IPADGFAVYA (254 aa)) constitute a GB1/RHD3-type G domain. Residue 58-65 (GSQSTGKS) coordinates GTP. Positions 476–500 (SDYKQELSLFQKDLEKISSQLRKDE) form a coiled coil. A helical transmembrane segment spans residues 744 to 764 (VPLYFYGLLLALGWNEIIAVL). Residues 765–767 (RNP) are Lumenal-facing. A helical transmembrane segment spans residues 768 to 788 (IYFIFLLLIGVGAYVTFRLNL). At 789 to 862 (WGPMINMAEA…TSDDDNDDDL (74 aa)) the chain is on the cytoplasmic side. The tract at residues 818 to 862 (SDSGRQAMAMSGRNARGTEEYEMSSNLKSKGRRTDTSDDDNDDDL) is disordered.

This sequence belongs to the TRAFAC class dynamin-like GTPase superfamily. GB1/RHD3 GTPase family. RHD3 subfamily.

Its subcellular location is the endoplasmic reticulum membrane. In terms of biological role, cooperates with the reticulon proteins and tubule-shaping DP1 family proteins to generate and maintain the structure of the tubular endoplasmic reticulum network. Has GTPase activity, which is required for its function in ER organization. In Arthroderma otae (strain ATCC MYA-4605 / CBS 113480) (Microsporum canis), this protein is Protein SEY1.